A 283-amino-acid chain; its full sequence is Ribosomal RNA small subunit methyltransferase A (283 aa).

S-adenosyl-L-methionine contacts are provided by asparagine 29, leucine 31, glycine 56, glutamate 77, aspartate 102, and asparagine 123.

The protein belongs to the class I-like SAM-binding methyltransferase superfamily. rRNA adenine N(6)-methyltransferase family. RsmA subfamily.

Its subcellular location is the cytoplasm. The enzyme catalyses adenosine(1518)/adenosine(1519) in 16S rRNA + 4 S-adenosyl-L-methionine = N(6)-dimethyladenosine(1518)/N(6)-dimethyladenosine(1519) in 16S rRNA + 4 S-adenosyl-L-homocysteine + 4 H(+). Specifically dimethylates two adjacent adenosines (A1518 and A1519) in the loop of a conserved hairpin near the 3'-end of 16S rRNA in the 30S particle. May play a critical role in biogenesis of 30S subunits. In Acidobacterium capsulatum (strain ATCC 51196 / DSM 11244 / BCRC 80197 / JCM 7670 / NBRC 15755 / NCIMB 13165 / 161), this protein is Ribosomal RNA small subunit methyltransferase A.